Consider the following 322-residue polypeptide: Pantothenate kinase (322 aa).

104-111 provides a ligand contact to ATP; it reads GSVAVGKS.

This sequence belongs to the prokaryotic pantothenate kinase family.

The protein resides in the cytoplasm. The enzyme catalyses (R)-pantothenate + ATP = (R)-4'-phosphopantothenate + ADP + H(+). Its pathway is cofactor biosynthesis; coenzyme A biosynthesis; CoA from (R)-pantothenate: step 1/5. The sequence is that of Pantothenate kinase from Leifsonia xyli subsp. xyli (strain CTCB07).